A 349-amino-acid chain; its full sequence is Phenylalanine--tRNA ligase alpha subunit (349 aa).

Glu261 contributes to the Mg(2+) binding site.

The protein belongs to the class-II aminoacyl-tRNA synthetase family. Phe-tRNA synthetase alpha subunit type 1 subfamily. In terms of assembly, tetramer of two alpha and two beta subunits. The cofactor is Mg(2+).

Its subcellular location is the cytoplasm. The catalysed reaction is tRNA(Phe) + L-phenylalanine + ATP = L-phenylalanyl-tRNA(Phe) + AMP + diphosphate + H(+). The protein is Phenylalanine--tRNA ligase alpha subunit of Leuconostoc citreum (strain KM20).